We begin with the raw amino-acid sequence, 129 residues long: Large ribosomal subunit protein uL22 (129 aa).

Belongs to the universal ribosomal protein uL22 family. Part of the 50S ribosomal subunit.

Functionally, this protein binds specifically to 23S rRNA; its binding is stimulated by other ribosomal proteins, e.g. L4, L17, and L20. It is important during the early stages of 50S assembly. It makes multiple contacts with different domains of the 23S rRNA in the assembled 50S subunit and ribosome. The globular domain of the protein is located near the polypeptide exit tunnel on the outside of the subunit, while an extended beta-hairpin is found that lines the wall of the exit tunnel in the center of the 70S ribosome. The protein is Large ribosomal subunit protein uL22 of Aster yellows witches'-broom phytoplasma (strain AYWB).